Here is a 546-residue protein sequence, read N- to C-terminus: Chaperonin GroEL (546 aa).

ATP contacts are provided by residues Thr30–Pro33, Lys51, Asp87–Thr91, Gly415, Asn479–Ala481, and Asp495.

This sequence belongs to the chaperonin (HSP60) family. As to quaternary structure, forms a cylinder of 14 subunits composed of two heptameric rings stacked back-to-back. Interacts with the co-chaperonin GroES.

It localises to the cytoplasm. It catalyses the reaction ATP + H2O + a folded polypeptide = ADP + phosphate + an unfolded polypeptide.. Functionally, together with its co-chaperonin GroES, plays an essential role in assisting protein folding. The GroEL-GroES system forms a nano-cage that allows encapsulation of the non-native substrate proteins and provides a physical environment optimized to promote and accelerate protein folding. This is Chaperonin GroEL from Paraburkholderia phytofirmans (strain DSM 17436 / LMG 22146 / PsJN) (Burkholderia phytofirmans).